We begin with the raw amino-acid sequence, 134 residues long: Small ribosomal subunit protein bS6 (134 aa).

Residues 99 to 134 form a disordered region; sequence PSQLAKSADEKRARKAPRSENFDNDQDDESNDDSDE. Positions 105 to 119 are enriched in basic and acidic residues; it reads SADEKRARKAPRSEN. The span at 120–134 shows a compositional bias: acidic residues; that stretch reads FDNDQDDESNDDSDE.

Belongs to the bacterial ribosomal protein bS6 family.

In terms of biological role, binds together with bS18 to 16S ribosomal RNA. The chain is Small ribosomal subunit protein bS6 from Psychrobacter sp. (strain PRwf-1).